Consider the following 428-residue polypeptide: Glutamate-1-semialdehyde 2,1-aminomutase (428 aa).

Lysine 267 is modified (N6-(pyridoxal phosphate)lysine).

The protein belongs to the class-III pyridoxal-phosphate-dependent aminotransferase family. HemL subfamily. As to quaternary structure, homodimer. Pyridoxal 5'-phosphate serves as cofactor.

It localises to the cytoplasm. It catalyses the reaction (S)-4-amino-5-oxopentanoate = 5-aminolevulinate. It functions in the pathway porphyrin-containing compound metabolism; protoporphyrin-IX biosynthesis; 5-aminolevulinate from L-glutamyl-tRNA(Glu): step 2/2. This chain is Glutamate-1-semialdehyde 2,1-aminomutase, found in Sulfurihydrogenibium sp. (strain YO3AOP1).